The chain runs to 122 residues: Cofilin/actin-depolymerizing factor homolog 1 (122 aa).

In terms of domain architecture, ADF-H spans 4-122 (GIRVNDNCVT…ESAQDVADLK (119 aa)).

It belongs to the actin-binding proteins ADF family. Interacts with monomeric actin, does not bind to actin polymers.

The protein resides in the cytoplasm. It localises to the cytoskeleton. Its function is as follows. Not involved in actin polymerisation, instead functions to stimulate nucleotide exchange on monomeric actin and influence turnover of the small amount of cytosolic actin microfilaments. Essential for erythrocytic schizogony. The protein is Cofilin/actin-depolymerizing factor homolog 1 of Plasmodium falciparum (isolate 3D7).